The chain runs to 230 residues: Large ribosomal subunit protein uL1 (230 aa).

This sequence belongs to the universal ribosomal protein uL1 family. In terms of assembly, part of the 50S ribosomal subunit.

Its function is as follows. Binds directly to 23S rRNA. The L1 stalk is quite mobile in the ribosome, and is involved in E site tRNA release. In terms of biological role, protein L1 is also a translational repressor protein, it controls the translation of the L11 operon by binding to its mRNA. In Ruminiclostridium cellulolyticum (strain ATCC 35319 / DSM 5812 / JCM 6584 / H10) (Clostridium cellulolyticum), this protein is Large ribosomal subunit protein uL1.